We begin with the raw amino-acid sequence, 794 residues long: DNA ligase (794 aa).

Positions 1–47 are disordered; that stretch reads MEEDLFSLAAGKQPSQQATNETAPRAGEARENAGTDHPGNAEDPAHR. Residues 13-22 are compositionally biased toward polar residues; the sequence is QPSQQATNET. Residues 27–47 show a composition bias toward basic and acidic residues; sequence GEARENAGTDHPGNAEDPAHR. NAD(+)-binding positions include 73–77, 122–123, and glutamate 160; these read DAEYD and SI. The active-site N6-AMP-lysine intermediate is lysine 162. NAD(+)-binding residues include arginine 183, glutamate 219, lysine 335, and lysine 359. The Zn(2+) site is built by cysteine 457, cysteine 460, cysteine 475, and cysteine 480. The BRCT domain maps to 717-794; that stretch reads IPAGSLSGKT…EEDFYKMIGN (78 aa).

Belongs to the NAD-dependent DNA ligase family. LigA subfamily. It depends on Mg(2+) as a cofactor. Requires Mn(2+) as cofactor.

The catalysed reaction is NAD(+) + (deoxyribonucleotide)n-3'-hydroxyl + 5'-phospho-(deoxyribonucleotide)m = (deoxyribonucleotide)n+m + AMP + beta-nicotinamide D-nucleotide.. Functionally, DNA ligase that catalyzes the formation of phosphodiester linkages between 5'-phosphoryl and 3'-hydroxyl groups in double-stranded DNA using NAD as a coenzyme and as the energy source for the reaction. It is essential for DNA replication and repair of damaged DNA. The chain is DNA ligase from Akkermansia muciniphila (strain ATCC BAA-835 / DSM 22959 / JCM 33894 / BCRC 81048 / CCUG 64013 / CIP 107961 / Muc).